A 235-amino-acid chain; its full sequence is 1-(5-phosphoribosyl)-5-[(5-phosphoribosylamino)methylideneamino] imidazole-4-carboxamide isomerase (235 aa).

The active-site Proton acceptor is Asp8. Catalysis depends on Asp128, which acts as the Proton donor.

The protein belongs to the HisA/HisF family.

It localises to the cytoplasm. The enzyme catalyses 1-(5-phospho-beta-D-ribosyl)-5-[(5-phospho-beta-D-ribosylamino)methylideneamino]imidazole-4-carboxamide = 5-[(5-phospho-1-deoxy-D-ribulos-1-ylimino)methylamino]-1-(5-phospho-beta-D-ribosyl)imidazole-4-carboxamide. The protein operates within amino-acid biosynthesis; L-histidine biosynthesis; L-histidine from 5-phospho-alpha-D-ribose 1-diphosphate: step 4/9. This Thermus thermophilus (strain ATCC BAA-163 / DSM 7039 / HB27) protein is 1-(5-phosphoribosyl)-5-[(5-phosphoribosylamino)methylideneamino] imidazole-4-carboxamide isomerase.